A 67-amino-acid chain; its full sequence is Ferredoxin (67 aa).

4Fe-4S ferredoxin-type domains lie at 3–31 (WKVS…MNDE) and 36–67 (PKVE…IEEA). [4Fe-4S] cluster-binding residues include Cys-12, Asp-15, and Cys-18. An intrachain disulfide couples Cys-22 to Cys-49. A [4Fe-4S] cluster-binding site is contributed by Cys-57.

As to quaternary structure, homodimer. Requires [4Fe-4S] cluster as cofactor. The cofactor is [3Fe-4S] cluster.

Its function is as follows. Ferredoxins are iron-sulfur proteins that transfer electrons in a wide variety of metabolic reactions. The sequence is that of Ferredoxin (fdxA) from Pyrococcus furiosus (strain ATCC 43587 / DSM 3638 / JCM 8422 / Vc1).